The chain runs to 284 residues: MEMO1 family protein MmarC6_1286 (284 aa).

Belongs to the MEMO1 family.

The chain is MEMO1 family protein MmarC6_1286 from Methanococcus maripaludis (strain C6 / ATCC BAA-1332).